The primary structure comprises 123 residues: EVKLVESGGGLVQPGGSLRLSCATSGFTFSDFYMEWVRQPPGKRLEWIAASRNKANDYTTEYSASVKGRFIVSRDTSQSILYLQMNALRAEDTAIYYCARDYYGBSYWYFDVWGAGTTVTVSS.

Positions 1–114 constitute an Ig-like domain; sequence EVKLVESGGG…BSYWYFDVWG (114 aa).

This Mus musculus (Mouse) protein is Ig heavy chain V region H8.